Consider the following 295-residue polypeptide: Small ribosomal subunit protein uS2 (295 aa).

A disordered region spans residues 247-295 (TDKGLTSKNVSKLKQTKKFSKTKNIDEETNTEFEQALNDADENKNSDNA).

The protein belongs to the universal ribosomal protein uS2 family.

This is Small ribosomal subunit protein uS2 from Rickettsia conorii (strain ATCC VR-613 / Malish 7).